The sequence spans 345 residues: MLSTVNNNIVIALDAMGGDFAPLSVIHGAGFFLDNLVDPGIKVFFHIYGDKEEVSPLLLKYKKVSNNSEFTHCSDNVLANDKPSFALRHRKDSSMKAAIVAVKEGKAFGVVSSGNTGALMAISRFILGTLPNIYRPAIASICPTKTKSLALLDLGANVDCNADSLFQFALMGSIFAKIALKIDNPEVALLNIGTEEVKGNDSVRGAFELLKNAPGINFKGYIEASEFLEGNIDVIVADGFVGNVMLKTAEATASTFINLIKQEVFNSWIAKMLVGILLKSKLNKALTRFNPKIRSGAMFLGLNGIIIKSHGNSDAISFAHAIKFAVNAISENLNQKIINGVSHIE.

This sequence belongs to the PlsX family. In terms of assembly, homodimer. Probably interacts with PlsY.

It localises to the cytoplasm. It carries out the reaction a fatty acyl-[ACP] + phosphate = an acyl phosphate + holo-[ACP]. The protein operates within lipid metabolism; phospholipid metabolism. In terms of biological role, catalyzes the reversible formation of acyl-phosphate (acyl-PO(4)) from acyl-[acyl-carrier-protein] (acyl-ACP). This enzyme utilizes acyl-ACP as fatty acyl donor, but not acyl-CoA. This Wolbachia pipientis wMel protein is Phosphate acyltransferase.